We begin with the raw amino-acid sequence, 194 residues long: Endoribonuclease ToxN (194 aa).

Positions 114–182 form a coiled coil; the sequence is MLKQYLFLKE…DQAKERDKAR (69 aa). The segment covering 171-182 has biased composition (basic and acidic residues); sequence ERDQAKERDKAR. A disordered region spans residues 171-194; the sequence is ERDQAKERDKARRIAYMRQMGRER.

The protein belongs to the ToxN/AbiQ toxin family. One ToxN monomer binds to a 34-nt-long single repeat of the ToxI RNA; this complex forms a triangular heterohexameric complex with ToxN connected by the ToxI RNA to another toxin molecule. The ToxI repeats are cleavage products of their precursor. The ToxI repeat forms a pseudoknot which occludes the toxin active site.

Toxic component of a type III toxin-antitoxin (TA) system. An endoribonuclease which cleaves between the first and second A of AAAAA sequences; it tolerates other nucleotides in positions +2 and +4 of the consensus. Digests cognate antitoxin RNA ToxI as shown by the 2'-3'-cyclic phosphate at the 3' end of the 34-nt repeats and probably other RNAs. Inhibits growth when expressed in E.coli without causing cell lysis; this bacteriostatic effect is neutralized by cognate RNA antitoxin ToxI, which has 2.9 nearly identical 34 nucleotide-long repeats. Non-cognate antitoxin RNA from P.atrosepticum does not inhibit this toxin. The toxin-antitoxin pair function in plasmid maintenance (a plasmid addiction system), but unlike its P.atrosepticum homolog it is not seen to confer resistance to bacteriophages. The sequence is that of Endoribonuclease ToxN from Bacillus thuringiensis subsp. kurstaki.